The sequence spans 378 residues: Glutamate 5-kinase (378 aa).

Lys-14 contributes to the ATP binding site. Residues Ser-54, Asp-141, and Asn-153 each contribute to the substrate site. Residue 173–174 participates in ATP binding; it reads SD. The PUA domain maps to 279–356; the sequence is AGRLTVDAGA…DEISAILGYD (78 aa).

Belongs to the glutamate 5-kinase family.

The protein resides in the cytoplasm. It catalyses the reaction L-glutamate + ATP = L-glutamyl 5-phosphate + ADP. The protein operates within amino-acid biosynthesis; L-proline biosynthesis; L-glutamate 5-semialdehyde from L-glutamate: step 1/2. Catalyzes the transfer of a phosphate group to glutamate to form L-glutamate 5-phosphate. The chain is Glutamate 5-kinase from Brucella abortus (strain S19).